Consider the following 218-residue polypeptide: NADH dehydrogenase [ubiquinone] iron-sulfur protein 7, mitochondrial (218 aa).

The segment covering 34-48 (LPALSPSTSPTSYTR) has biased composition (low complexity). A disordered region spans residues 34-61 (LPALSPSTSPTSYTRPGPPSTSPPPPGL). Positions 49–60 (PGPPSTSPPPPG) are enriched in pro residues. [4Fe-4S] cluster is bound by residues Cys93, Cys94, Cys158, and Cys188.

Belongs to the complex I 20 kDa subunit family. As to quaternary structure, complex I is composed of at least 49 different subunits. This is a component of the iron-sulfur (IP) fragment of the enzyme. [4Fe-4S] cluster serves as cofactor.

It localises to the mitochondrion. The catalysed reaction is a ubiquinone + NADH + 5 H(+)(in) = a ubiquinol + NAD(+) + 4 H(+)(out). Core subunit of the mitochondrial membrane respiratory chain NADH dehydrogenase (Complex I) that is believed to belong to the minimal assembly required for catalysis. Complex I functions in the transfer of electrons from NADH to the respiratory chain. The immediate electron acceptor for the enzyme is believed to be ubiquinone. This is NADH dehydrogenase [ubiquinone] iron-sulfur protein 7, mitochondrial from Arabidopsis thaliana (Mouse-ear cress).